The primary structure comprises 80 residues: Exodeoxyribonuclease 7 small subunit (80 aa).

This sequence belongs to the XseB family. In terms of assembly, heterooligomer composed of large and small subunits.

It localises to the cytoplasm. The enzyme catalyses Exonucleolytic cleavage in either 5'- to 3'- or 3'- to 5'-direction to yield nucleoside 5'-phosphates.. Bidirectionally degrades single-stranded DNA into large acid-insoluble oligonucleotides, which are then degraded further into small acid-soluble oligonucleotides. In Rickettsia felis (strain ATCC VR-1525 / URRWXCal2) (Rickettsia azadi), this protein is Exodeoxyribonuclease 7 small subunit.